The chain runs to 151 residues: 16.9 kDa class I heat shock protein 1 (151 aa).

One can recognise a sHSP domain in the interval 37–151 (ETAAFANARV…PEVKAIEISG (115 aa)).

It belongs to the small heat shock protein (HSP20) family. As to quaternary structure, may form oligomeric structures.

The protein resides in the cytoplasm. The chain is 16.9 kDa class I heat shock protein 1 (hsp16.9A) from Triticum aestivum (Wheat).